The chain runs to 506 residues: Lysine--tRNA ligase (506 aa).

2 residues coordinate Mg(2+): E415 and E422.

Belongs to the class-II aminoacyl-tRNA synthetase family. As to quaternary structure, homodimer. Requires Mg(2+) as cofactor.

The protein resides in the cytoplasm. It carries out the reaction tRNA(Lys) + L-lysine + ATP = L-lysyl-tRNA(Lys) + AMP + diphosphate. The sequence is that of Lysine--tRNA ligase (lysS) from Buchnera aphidicola subsp. Acyrthosiphon pisum (strain APS) (Acyrthosiphon pisum symbiotic bacterium).